Consider the following 79-residue polypeptide: Sec-independent protein translocase protein TatA (79 aa).

A helical transmembrane segment spans residues 1–21 (MGFSTTHLLIFLVIIIVIFGT). The disordered stretch occupies residues 43 to 63 (KEGSDKAADAPAAAPQQVASS). Over residues 51-63 (DAPAAAPQQVASS) the composition is skewed to low complexity.

This sequence belongs to the TatA/E family. As to quaternary structure, the Tat system comprises two distinct complexes: a TatABC complex, containing multiple copies of TatA, TatB and TatC subunits, and a separate TatA complex, containing only TatA subunits. Substrates initially bind to the TatABC complex, which probably triggers association of the separate TatA complex to form the active translocon.

The protein resides in the cell inner membrane. Functionally, part of the twin-arginine translocation (Tat) system that transports large folded proteins containing a characteristic twin-arginine motif in their signal peptide across membranes. TatA could form the protein-conducting channel of the Tat system. The polypeptide is Sec-independent protein translocase protein TatA (Albidiferax ferrireducens (strain ATCC BAA-621 / DSM 15236 / T118) (Rhodoferax ferrireducens)).